Reading from the N-terminus, the 380-residue chain is Cytoplasmic protein NCK2 (380 aa).

Thr2 bears the N-acetylthreonine mark. Residues 2–61 (TEEVIVIAKWDYTAQQDQELDIKKNERLWLLDDSKTWWRVRNAANRTGYVPSNYVERKNS) form the SH3 1 domain. The segment at 79-102 (KTRRKTSARDASPTPSTDAEYPAN) is disordered. Ser90 carries the post-translational modification Phosphoserine. The residue at position 92 (Thr92) is a Phosphothreonine. At Ser94 the chain carries Phosphoserine. Position 110 is a phosphotyrosine (Tyr110). 2 consecutive SH3 domains span residues 111–170 (DLNI…EEVD) and 195–257 (RVLH…VLSD). One can recognise an SH2 domain in the interval 285–380 (WYYGNVTRHQ…EKLYLVRALQ (96 aa)).

As to quaternary structure, interacts with DOCK1, LIMS1 and TGFB1I1. Part of a complex containing PPP1R15B, PP1 and NCK2. Interacts with FASLG. Interacts with AXL. Interacts with PAK1, PKN2 and SOS1. Interacts (via SH2 domain) with EGFR. Interacts (via SH2 domain) with DDR1. Interacts with IRS1. In terms of processing, phosphorylated. As to expression, ubiquitous.

The protein resides in the cytoplasm. Its subcellular location is the endoplasmic reticulum. Functionally, adapter protein which associates with tyrosine-phosphorylated growth factor receptors or their cellular substrates. Maintains low levels of EIF2S1 phosphorylation by promoting its dephosphorylation by PP1. Plays a role in ELK1-dependent transcriptional activation in response to activated Ras signaling. In Homo sapiens (Human), this protein is Cytoplasmic protein NCK2 (NCK2).